We begin with the raw amino-acid sequence, 252 residues long: MKTVTVKDLVIGTGAPKIIVSLMAKDIASVKSEALAYREADFDILEWRVDHYADLSNVDSVMAAAKILRKTMPEKPLLFTFRSAKEGGEQAISTEAYIALNRAAIDSGLVDMIDLELFTGDDQVKETVAYAHAHDVKVVMSNHDFHKTPEAEEIIARLRKMQSFDADIPKIALMPQSTSDVLTLLAATLEMQEQYADRPIITMSMAKTGVISRLAGEVFGSAATFGAVKKASAPGQISVNDLRTVLTILHQA.

Residues Ser21, 46 to 48 (EWR), and Arg82 contribute to the 3-dehydroquinate site. The active-site Proton donor/acceptor is the His143. Lys170 functions as the Schiff-base intermediate with substrate in the catalytic mechanism. 3 residues coordinate 3-dehydroquinate: Arg213, Ser232, and Gln236.

It belongs to the type-I 3-dehydroquinase family. As to quaternary structure, homodimer.

It carries out the reaction 3-dehydroquinate = 3-dehydroshikimate + H2O. Its pathway is metabolic intermediate biosynthesis; chorismate biosynthesis; chorismate from D-erythrose 4-phosphate and phosphoenolpyruvate: step 3/7. In terms of biological role, involved in the third step of the chorismate pathway, which leads to the biosynthesis of aromatic amino acids. Catalyzes the cis-dehydration of 3-dehydroquinate (DHQ) and introduces the first double bond of the aromatic ring to yield 3-dehydroshikimate. The sequence is that of 3-dehydroquinate dehydratase from Escherichia coli O17:K52:H18 (strain UMN026 / ExPEC).